A 390-amino-acid chain; its full sequence is Protein NDRG4-A (390 aa).

A disordered region spans residues 356–390; the sequence is LTSASSVDGSRPRPCTQSESSDGIGQINHTMEVSC. Over residues 370-390 the composition is skewed to polar residues; that stretch reads CTQSESSDGIGQINHTMEVSC.

Belongs to the NDRG family.

It is found in the cytoplasm. The protein resides in the cytosol. Its function is as follows. Contributes to the maintenance of intracerebral BDNF levels within the normal range. May enhance growth factor-induced ERK1 and ERK2 phosphorylation. May attenuate growth factor-promoted ELK1 phosphorylation in a microtubule-dependent manner. The sequence is that of Protein NDRG4-A (ndrg4-a) from Xenopus laevis (African clawed frog).